The following is a 145-amino-acid chain: Large ribosomal subunit protein uL13 (145 aa).

Belongs to the universal ribosomal protein uL13 family. As to quaternary structure, part of the 50S ribosomal subunit.

In terms of biological role, this protein is one of the early assembly proteins of the 50S ribosomal subunit, although it is not seen to bind rRNA by itself. It is important during the early stages of 50S assembly. The polypeptide is Large ribosomal subunit protein uL13 (Bacillus velezensis (strain DSM 23117 / BGSC 10A6 / LMG 26770 / FZB42) (Bacillus amyloliquefaciens subsp. plantarum)).